A 236-amino-acid chain; its full sequence is Eukaryotic translation initiation factor 3 subunit K (236 aa).

A PCI domain is found at 42–222 (YDKDILVTTL…TIKSRNIEEK (181 aa)).

This sequence belongs to the eIF-3 subunit K family. As to quaternary structure, component of the eukaryotic translation initiation factor 3 (eIF-3) complex.

It is found in the cytoplasm. In terms of biological role, component of the eukaryotic translation initiation factor 3 (eIF-3) complex, which is involved in protein synthesis of a specialized repertoire of mRNAs and, together with other initiation factors, stimulates binding of mRNA and methionyl-tRNAi to the 40S ribosome. The eIF-3 complex specifically targets and initiates translation of a subset of mRNAs involved in cell proliferation. The polypeptide is Eukaryotic translation initiation factor 3 subunit K (Brugia malayi (Filarial nematode worm)).